The primary structure comprises 216 residues: Cyclic AMP receptor protein (216 aa).

Leucine 6–arginine 126 is a binding site for a nucleoside 3',5'-cyclic phosphate. 3',5'-cyclic AMP contacts are provided by residues glycine 75–serine 78 and arginine 85–serine 86. Positions glutamate 140–alanine 206 constitute an HTH crp-type domain. The H-T-H motif DNA-binding region spans histidine 166–histidine 185.

Homodimer.

In terms of biological role, activates transcription. Positively regulates six promoters upstream of the TTHB186, TTHB147, TTHB178, TTHB159, TTHA0771 and TTHA0176 genes in a cAMP-dependent manner. Regulated genes include clustered regularly interspaced short palindromic repeat (CRISPR) associated (Cas) genes, and the genes encoding a putative transcriptional regulator, a protein containing the exonuclease III-like domain of DNA polymerase, a GCN5-related acetyltransferase homolog, and some T.thermophilus-specific proteins of unknown function. The consensus DNA-binding site of this transcriptional regulator is 5'-(CT)NNG(G/T)(G/T)C(A/C)N(A/T)NNTCACAN(G/C)(G/C)-3' in which N is G, A, T or C. The protein is Cyclic AMP receptor protein of Thermus thermophilus (strain ATCC 27634 / DSM 579 / HB8).